The chain runs to 285 residues: 4-diphosphocytidyl-2-C-methyl-D-erythritol kinase (285 aa).

Lys12 is a catalytic residue. 95 to 105 (PMGGGVGGGSS) is an ATP binding site. Residue Asp137 is part of the active site.

It belongs to the GHMP kinase family. IspE subfamily.

The enzyme catalyses 4-CDP-2-C-methyl-D-erythritol + ATP = 4-CDP-2-C-methyl-D-erythritol 2-phosphate + ADP + H(+). The protein operates within isoprenoid biosynthesis; isopentenyl diphosphate biosynthesis via DXP pathway; isopentenyl diphosphate from 1-deoxy-D-xylulose 5-phosphate: step 3/6. Functionally, catalyzes the phosphorylation of the position 2 hydroxy group of 4-diphosphocytidyl-2C-methyl-D-erythritol. The sequence is that of 4-diphosphocytidyl-2-C-methyl-D-erythritol kinase from Actinobacillus pleuropneumoniae serotype 7 (strain AP76).